Here is a 149-residue protein sequence, read N- to C-terminus: Oligosaccharyltransferase complex subunit ostc-A (149 aa).

The Cytoplasmic portion of the chain corresponds to 1 to 32 (MESLYRVPFTVLECPNLKLKKPSWLHMPSAMT). Residues 33 to 53 (VYAMVVVSYFLITGGIIYDVI) form a helical membrane-spanning segment. The Extracellular portion of the chain corresponds to 54–83 (VEPPSVGSMTDEHGHQRPVAFLAYRVNGQY). The helical transmembrane segment at 84–104 (IMEGLASSFLFTMGGLGFIIL) threads the bilayer. The Cytoplasmic portion of the chain corresponds to 105–117 (DRSNTPNIPKLNR). The chain crosses the membrane as a helical span at residues 118-138 (FLLLFIGFVCVLLSFFMARVF). Over 139–149 (MRMKLPGYLMG) the chain is Extracellular.

It belongs to the OSTC family. Specific component of the STT3A-containing form of the oligosaccharyltransferase (OST) complex.

It is found in the membrane. It participates in protein modification; protein glycosylation. Its function is as follows. Specific component of the STT3A-containing form of the oligosaccharyl transferase (OST) complex that catalyzes the initial transfer of a defined glycan (Glc(3)Man(9)GlcNAc(2) in eukaryotes) from the lipid carrier dolichol-pyrophosphate to an asparagine residue within an Asn-X-Ser/Thr consensus motif in nascent polypeptide chains, the first step in protein N-glycosylation. N-glycosylation occurs cotranslationally and the complex associates with the Sec61 complex at the channel-forming translocon complex that mediates protein translocation across the endoplasmic reticulum (ER). All subunits are required for a maximal enzyme activity. This is Oligosaccharyltransferase complex subunit ostc-A from Xenopus laevis (African clawed frog).